A 31-amino-acid polypeptide reads, in one-letter code: Cytochrome b6-f complex subunit 6 (31 aa).

The chain crosses the membrane as a helical span at residues 4 to 24 (LTSYFGFLLAALTITFVLFIG).

Belongs to the PetL family. In terms of assembly, the 4 large subunits of the cytochrome b6-f complex are cytochrome b6, subunit IV (17 kDa polypeptide, PetD), cytochrome f and the Rieske protein, while the 4 small subunits are PetG, PetL, PetM and PetN. The complex functions as a dimer.

The protein localises to the plastid. Its subcellular location is the chloroplast thylakoid membrane. Its function is as follows. Component of the cytochrome b6-f complex, which mediates electron transfer between photosystem II (PSII) and photosystem I (PSI), cyclic electron flow around PSI, and state transitions. PetL is important for photoautotrophic growth as well as for electron transfer efficiency and stability of the cytochrome b6-f complex. The protein is Cytochrome b6-f complex subunit 6 of Oxybasis rubra (Red goosefoot).